The primary structure comprises 311 residues: Probable manganese-dependent inorganic pyrophosphatase (311 aa).

Mn(2+) is bound by residues H9, D13, D15, D75, H97, and D149.

The protein belongs to the PPase class C family. Requires Mn(2+) as cofactor.

Its subcellular location is the cytoplasm. It catalyses the reaction diphosphate + H2O = 2 phosphate + H(+). In Lactobacillus delbrueckii subsp. bulgaricus (strain ATCC BAA-365 / Lb-18), this protein is Probable manganese-dependent inorganic pyrophosphatase.